The sequence spans 132 residues: Small ribosomal subunit protein uS8c (132 aa).

Belongs to the universal ribosomal protein uS8 family. As to quaternary structure, part of the 30S ribosomal subunit.

Its subcellular location is the plastid. The protein localises to the chloroplast. Functionally, one of the primary rRNA binding proteins, it binds directly to 16S rRNA central domain where it helps coordinate assembly of the platform of the 30S subunit. The polypeptide is Small ribosomal subunit protein uS8c (rps8) (Nymphaea alba (White water-lily)).